The sequence spans 202 residues: FMN-dependent NADH:quinone oxidoreductase 2 (202 aa).

FMN contacts are provided by residues Ser9, 15-17 (SAS), and 95-98 (MWNL).

It belongs to the azoreductase type 1 family. Homodimer. The cofactor is FMN.

The catalysed reaction is 2 a quinone + NADH + H(+) = 2 a 1,4-benzosemiquinone + NAD(+). The enzyme catalyses N,N-dimethyl-1,4-phenylenediamine + anthranilate + 2 NAD(+) = 2-(4-dimethylaminophenyl)diazenylbenzoate + 2 NADH + 2 H(+). Its function is as follows. Quinone reductase that provides resistance to thiol-specific stress caused by electrophilic quinones. In terms of biological role, also exhibits azoreductase activity. Catalyzes the reductive cleavage of the azo bond in aromatic azo compounds to the corresponding amines. This Hahella chejuensis (strain KCTC 2396) protein is FMN-dependent NADH:quinone oxidoreductase 2.